A 172-amino-acid polypeptide reads, in one-letter code: uncharacterized protein (172 aa).

The protein belongs to the flavoredoxin family. FMN serves as cofactor.

This is an uncharacterized protein from Pyrococcus horikoshii (strain ATCC 700860 / DSM 12428 / JCM 9974 / NBRC 100139 / OT-3).